Reading from the N-terminus, the 641-residue chain is Chaperone protein DnaK (641 aa).

At threonine 200 the chain carries Phosphothreonine; by autocatalysis. Over residues 605–623 (AAEQGGSADAASGNAQASK) the composition is skewed to low complexity. A disordered region spans residues 605-627 (AAEQGGSADAASGNAQASKAADD).

This sequence belongs to the heat shock protein 70 family.

Functionally, acts as a chaperone. The polypeptide is Chaperone protein DnaK (Xanthomonas oryzae pv. oryzae (strain MAFF 311018)).